The sequence spans 429 residues: Threonine synthase (429 aa).

Position 108 is an N6-(pyridoxal phosphate)lysine (Lys-108).

The protein belongs to the threonine synthase family. It depends on pyridoxal 5'-phosphate as a cofactor.

It catalyses the reaction O-phospho-L-homoserine + H2O = L-threonine + phosphate. Its pathway is amino-acid biosynthesis; L-threonine biosynthesis; L-threonine from L-aspartate: step 5/5. In terms of biological role, catalyzes the gamma-elimination of phosphate from L-phosphohomoserine and the beta-addition of water to produce L-threonine. The polypeptide is Threonine synthase (thrC) (Buchnera aphidicola subsp. Schizaphis graminum (strain Sg)).